The following is a 241-amino-acid chain: Small ribosomal subunit protein eS4 (241 aa).

In terms of domain architecture, S4 RNA-binding spans 37–99 (IPLGLLLRDY…ADLYLRIVPD (63 aa)).

Belongs to the eukaryotic ribosomal protein eS4 family.

The protein is Small ribosomal subunit protein eS4 of Metallosphaera sedula (strain ATCC 51363 / DSM 5348 / JCM 9185 / NBRC 15509 / TH2).